We begin with the raw amino-acid sequence, 98 residues long: Integration host factor subunit alpha (98 aa).

Basic and acidic residues predominate over residues 53-69 (DLREKNERPGRNPKTGE). The disordered stretch occupies residues 53 to 72 (DLREKNERPGRNPKTGEDIP).

This sequence belongs to the bacterial histone-like protein family. Heterodimer of an alpha and a beta chain.

In terms of biological role, this protein is one of the two subunits of integration host factor, a specific DNA-binding protein that functions in genetic recombination as well as in transcriptional and translational control. In Vibrio atlanticus (strain LGP32) (Vibrio splendidus (strain Mel32)), this protein is Integration host factor subunit alpha.